Here is a 141-residue protein sequence, read N- to C-terminus: Nucleoside diphosphate kinase (141 aa).

The ATP site is built by lysine 11, phenylalanine 59, arginine 87, threonine 93, arginine 104, and asparagine 114. Histidine 117 serves as the catalytic Pros-phosphohistidine intermediate.

This sequence belongs to the NDK family. As to quaternary structure, homotetramer. Requires Mg(2+) as cofactor.

The protein localises to the cytoplasm. It catalyses the reaction a 2'-deoxyribonucleoside 5'-diphosphate + ATP = a 2'-deoxyribonucleoside 5'-triphosphate + ADP. The enzyme catalyses a ribonucleoside 5'-diphosphate + ATP = a ribonucleoside 5'-triphosphate + ADP. Major role in the synthesis of nucleoside triphosphates other than ATP. The ATP gamma phosphate is transferred to the NDP beta phosphate via a ping-pong mechanism, using a phosphorylated active-site intermediate. The sequence is that of Nucleoside diphosphate kinase from Burkholderia cenocepacia (strain HI2424).